Reading from the N-terminus, the 283-residue chain is Phosphatidylglycerol--prolipoprotein diacylglyceryl transferase (283 aa).

Helical transmembrane passes span 17 to 37 (LAVRWYALSYILGFILFTFLG), 56 to 76 (FLTWGILGVILGGRLGYVLFY), and 92 to 112 (WEGGMSFHGGFLGVVIAIWLF). Arg139 is an a 1,2-diacyl-sn-glycero-3-phospho-(1'-sn-glycerol) binding site. A run of 2 helical transmembrane segments spans residues 222–242 (GQTAALFLGGYGVFRFIAEFA) and 255–275 (GLSMGQWLSVPMIVLGIVGFV).

It belongs to the Lgt family.

It localises to the cell inner membrane. It catalyses the reaction L-cysteinyl-[prolipoprotein] + a 1,2-diacyl-sn-glycero-3-phospho-(1'-sn-glycerol) = an S-1,2-diacyl-sn-glyceryl-L-cysteinyl-[prolipoprotein] + sn-glycerol 1-phosphate + H(+). It functions in the pathway protein modification; lipoprotein biosynthesis (diacylglyceryl transfer). Functionally, catalyzes the transfer of the diacylglyceryl group from phosphatidylglycerol to the sulfhydryl group of the N-terminal cysteine of a prolipoprotein, the first step in the formation of mature lipoproteins. This is Phosphatidylglycerol--prolipoprotein diacylglyceryl transferase from Neisseria gonorrhoeae (strain ATCC 700825 / FA 1090).